A 578-amino-acid polypeptide reads, in one-letter code: Vacuolar protein 8 (578 aa).

ARM repeat units follow at residues 58–95, 96–135, 137–176, 178–217, 219–258, 262–301, 303–342, 344–384, and 428–467; these read NRAETDFFRGEPLSALSTLVYSDNVDLQRSASLTFAEI, TERDVREVDRDTLEPILFLLQSSDIEVQRAASAALGNLAV, ADNKVLIVALGGLAPLIRQMMSPNVEVQCNAVGCITNLAT, EDNKAKIARSGALGPLIRLAKSKDMRVQRNATGALLNMTH, DDNRQQLVNAGAIPVLVQLLSSSDVDVQYYCTTALSNIAV, NRKRLAQTESRLVQSLVHLMDSSTPKVQCQAALALRNLAS, EKYQLEIVRAKGLPPLLRLLQSSYLPLILSAVACIRNISI, PLNE…NLAA, and DELKPHLLNLGVFDVLIPLTESESIEVQGNSAAALGNLSS.

This sequence belongs to the beta-catenin family.

It is found in the vacuole membrane. In terms of biological role, functions in both vacuole inheritance and protein targeting from the cytoplasm to vacuole. This Aspergillus oryzae (strain ATCC 42149 / RIB 40) (Yellow koji mold) protein is Vacuolar protein 8 (vac8).